Reading from the N-terminus, the 172-residue chain is Small ribosomal subunit protein bS6 (172 aa).

The tract at residues 100–172 (LPAKRVVKTS…ENKEIEKKED (73 aa)) is disordered. A compositionally biased stretch (basic and acidic residues) spans 107–172 (KTSEKNVKED…ENKEIEKKED (66 aa)).

The protein belongs to the bacterial ribosomal protein bS6 family.

Binds together with bS18 to 16S ribosomal RNA. The sequence is that of Small ribosomal subunit protein bS6 from Prochlorococcus marinus (strain MIT 9211).